A 198-amino-acid chain; its full sequence is Protein GrpE (198 aa).

It belongs to the GrpE family. Homodimer.

Its subcellular location is the cytoplasm. Its function is as follows. Participates actively in the response to hyperosmotic and heat shock by preventing the aggregation of stress-denatured proteins, in association with DnaK and GrpE. It is the nucleotide exchange factor for DnaK and may function as a thermosensor. Unfolded proteins bind initially to DnaJ; upon interaction with the DnaJ-bound protein, DnaK hydrolyzes its bound ATP, resulting in the formation of a stable complex. GrpE releases ADP from DnaK; ATP binding to DnaK triggers the release of the substrate protein, thus completing the reaction cycle. Several rounds of ATP-dependent interactions between DnaJ, DnaK and GrpE are required for fully efficient folding. This is Protein GrpE from Baumannia cicadellinicola subsp. Homalodisca coagulata.